A 238-amino-acid polypeptide reads, in one-letter code: Protein Iojap, chloroplastic (238 aa).

The transit peptide at 1 to 66 directs the protein to the chloroplast; the sequence is MASSTGLTVA…KILTSLSNSR (66 aa).

It belongs to the Iojap/RsfS family. As to quaternary structure, interacts with chloroplast ribosomal protein uL14c (rpl14).

It is found in the plastid. It localises to the chloroplast. May be a ribosome silencing factor (Potential). Involved in plastid biogenesis. In Arabidopsis thaliana (Mouse-ear cress), this protein is Protein Iojap, chloroplastic (IJ).